We begin with the raw amino-acid sequence, 986 residues long: DNA polymerase (986 aa).

Disordered stretches follow at residues Asp-804–Arg-824 and Arg-944–Asp-969. Over residues Asp-948 to Asn-968 the composition is skewed to acidic residues.

Belongs to the DNA polymerase type-B family.

It carries out the reaction DNA(n) + a 2'-deoxyribonucleoside 5'-triphosphate = DNA(n+1) + diphosphate. Its function is as follows. Replicates the viral genome, host DNA polymerases cannot substitute for the viral enzyme in this process. This chain is DNA polymerase (POL), found in Bombyx mori (Silk moth).